Consider the following 86-residue polypeptide: Toxin Td1 (86 aa).

Positions 1 to 20 (MIRFILFISCFFLIGMVIEC) are cleaved as a signal peptide. Residues 21-83 (KDGYLMEPNG…VWERATNRCG (63 aa)) enclose the LCN-type CS-alpha/beta domain. 4 disulfide bridges follow: Cys-31–Cys-82, Cys-35–Cys-57, Cys-43–Cys-63, and Cys-47–Cys-65. The residue at position 84 (Lys-84) is a Lysine amide.

Expressed by the venom gland.

It is found in the secreted. Beta toxins bind voltage-independently at site-4 of sodium channels (Nav) and shift the voltage of activation toward more negative potentials thereby affecting sodium channel activation and promoting spontaneous and repetitive firing. This Tityus discrepans (Venezuelan scorpion) protein is Toxin Td1.